Reading from the N-terminus, the 331-residue chain is Probable allantoicase (331 aa).

Belongs to the allantoicase family.

It catalyses the reaction allantoate + H2O = (S)-ureidoglycolate + urea. It participates in nitrogen metabolism; (S)-allantoin degradation; (S)-ureidoglycolate from allantoate (aminidohydrolase route): step 1/1. This chain is Probable allantoicase, found in Pseudomonas fluorescens (strain SBW25).